We begin with the raw amino-acid sequence, 394 residues long: G2/mitotic-specific cyclin-B (394 aa).

Residues Gln360–Arg394 form a disordered region. A compositionally biased stretch (polar residues) spans Lys379 to Arg394.

Belongs to the cyclin family. Cyclin AB subfamily. In terms of assembly, interacts with the CDK1 protein kinase to form a serine/threonine kinase holoenzyme complex also known as maturation promoting factor (MPF). The cyclin subunit imparts substrate specificity to the complex.

Functionally, essential for the control of the cell cycle at the G2/M (mitosis) transition. This chain is G2/mitotic-specific cyclin-B, found in Patiria pectinifera (Starfish).